The following is a 450-amino-acid chain: Plasmepsin VII (450 aa).

Residues 1 to 24 form the signal peptide; sequence MNKNIIQIYLFVFILLLKQHIVIL. One can recognise a Peptidase A1 domain in the interval 92 to 441; sequence YYGEVQIGEQ…DKDNLKIGFV (350 aa). Residues aspartate 111 and aspartate 324 contribute to the active site.

The protein belongs to the peptidase A1 family.

It is found in the cytoplasm. The chain is Plasmepsin VII from Plasmodium falciparum (isolate NF54).